The following is a 101-amino-acid chain: Small ribosomal subunit protein bS18c (101 aa).

It belongs to the bacterial ribosomal protein bS18 family. As to quaternary structure, part of the 30S ribosomal subunit.

The protein resides in the plastid. It localises to the chloroplast. This is Small ribosomal subunit protein bS18c from Solanum bulbocastanum (Wild potato).